Here is a 271-residue protein sequence, read N- to C-terminus: 3-methyl-2-oxobutanoate hydroxymethyltransferase (271 aa).

Residues D53 and D92 each contribute to the Mg(2+) site. Residues 53–54 (DS), D92, and K120 each bind 3-methyl-2-oxobutanoate. Mg(2+) is bound at residue E122. The active-site Proton acceptor is the E189.

It belongs to the PanB family. As to quaternary structure, homodecamer; pentamer of dimers. The cofactor is Mg(2+).

The protein resides in the cytoplasm. It catalyses the reaction 3-methyl-2-oxobutanoate + (6R)-5,10-methylene-5,6,7,8-tetrahydrofolate + H2O = 2-dehydropantoate + (6S)-5,6,7,8-tetrahydrofolate. The protein operates within cofactor biosynthesis; (R)-pantothenate biosynthesis; (R)-pantoate from 3-methyl-2-oxobutanoate: step 1/2. Its function is as follows. Catalyzes the reversible reaction in which hydroxymethyl group from 5,10-methylenetetrahydrofolate is transferred onto alpha-ketoisovalerate to form ketopantoate. This chain is 3-methyl-2-oxobutanoate hydroxymethyltransferase, found in Burkholderia vietnamiensis (strain G4 / LMG 22486) (Burkholderia cepacia (strain R1808)).